The following is a 648-amino-acid chain: Replication restart protein PriA (648 aa).

Residues 131–297 (TILNESNKPT…EIGKYQLVTL (167 aa)) enclose the Helicase ATP-binding domain. An ATP-binding site is contributed by 144-151 (GVTGSGKT). Positions 240-243 (DEEH) match the DEAH box motif. The Zn(2+) site is built by Cys358, Cys361, Cys367, Cys370, Cys385, Cys388, Cys398, and Cys401. The region spanning 393–548 (KIFSSCPECL…SFFANELEIR (156 aa)) is the Helicase C-terminal domain.

This sequence belongs to the helicase family. PriA subfamily. Component of the replication restart primosome. The cofactor is Zn(2+).

It carries out the reaction Couples ATP hydrolysis with the unwinding of duplex DNA by translocating in the 3'-5' direction.. It catalyses the reaction ATP + H2O = ADP + phosphate + H(+). Initiates the restart of stalled replication forks, which reloads the replicative helicase on sites other than the origin of replication. Recognizes and binds to abandoned replication forks and remodels them to uncover a helicase loading site. Promotes assembly of the primosome at these replication forks. This is Replication restart protein PriA from Rickettsia conorii (strain ATCC VR-613 / Malish 7).